The sequence spans 185 residues: Ribosome-recycling factor (185 aa).

The protein belongs to the RRF family.

Its subcellular location is the cytoplasm. Functionally, responsible for the release of ribosomes from messenger RNA at the termination of protein biosynthesis. May increase the efficiency of translation by recycling ribosomes from one round of translation to another. The sequence is that of Ribosome-recycling factor from Streptococcus mutans serotype c (strain ATCC 700610 / UA159).